The primary structure comprises 203 residues: Cbp/p300-interacting transactivator 1 (203 aa).

2 disordered regions span residues 1-24 (MPTM…DANQ) and 51-86 (TANG…PSFN). Low complexity predominate over residues 61-84 (PTSSSGSTSPIGSPTATPSSKPPS). A Nuclear export signal motif is present at residues 168 to 177 (LMSLVVELGL).

The protein belongs to the CITED family. As to quaternary structure, homodimer. Binds to RBM14. Interacts (via N-terminus) with HSPA8; the interaction suppresses the association of CITED1 with p300/CBP and SMAD-mediated transcription transactivation. Interacts (via C-terminus) with TOX3 (via HGM box); the interaction increases estrogen-response element (ERE)-dependent transcription and protection against cell death. Interacts with ESR1; the interaction occurs in a estrogen-dependent manner. Interacts (unphosphorylated form preferentially and via C-terminus) with EP300. Interacts (via C-terminus) with CREBBP. Interacts with EGR2. Phosphorylated. Phosphorylation changes in a cell cycle-dependent manner and reduces its transcriptional cofactor activity. In terms of tissue distribution, expressed in calvarial osteoblasts. Expressed in nulliparous mammary epithelial cells; absent in pregnant mice and in lacting mammary glands. Also expressed in mammary tumors (at protein level). Expressed only in melanocytes and testis. Expressed at high levels in the strongly pigmented melanoma cells but at low levels in the weakly pigmented cells.

It localises to the nucleus. The protein localises to the cytoplasm. Transcriptional coactivator of the p300/CBP-mediated transcription complex. Enhances SMAD-mediated transcription by strengthening the functional link between the DNA-binding SMAD transcription factors and the p300/CBP transcription coactivator complex. Stimulates estrogen-dependent transactivation activity mediated by estrogen receptors signaling; stabilizes the interaction of estrogen receptor ESR1 and histone acetyltransferase EP300. Positively regulates TGF-beta signaling through its association with the SMAD/p300/CBP-mediated transcriptional coactivator complex. Induces transcription from estrogen-responsive promoters and protection against cell death. Potentiates EGR2-mediated transcriptional activation activity from the ERBB2 promoter. Acts as an inhibitor of osteoblastic mineralization through a cAMP-dependent parathyroid hormone receptor signaling. May play a role in pigmentation of melanocytes. Associates with chromatin to the estrogen-responsive TGF-alpha promoter region in a estrogen-dependent manner. This chain is Cbp/p300-interacting transactivator 1 (Cited1), found in Mus musculus (Mouse).